A 174-amino-acid chain; its full sequence is Ribosome rescue factor SmrB (174 aa).

The Smr domain maps to 96 to 171 (LDLHGMNQQQ…GDSAILVLLD (76 aa)).

Belongs to the SmrB family. As to quaternary structure, associates with collided ribosomes, but not with correctly translating polysomes.

Functionally, acts as a ribosome collision sensor. Detects stalled/collided disomes (pairs of ribosomes where the leading ribosome is stalled and a second ribosome has collided with it) and endonucleolytically cleaves mRNA at the 5' boundary of the stalled ribosome. Stalled/collided disomes form a new interface (primarily via the 30S subunits) that binds SmrB. Cleaved mRNA becomes available for tmRNA ligation, leading to ribosomal subunit dissociation and rescue of stalled ribosomes. The polypeptide is Ribosome rescue factor SmrB (Aeromonas hydrophila subsp. hydrophila (strain ATCC 7966 / DSM 30187 / BCRC 13018 / CCUG 14551 / JCM 1027 / KCTC 2358 / NCIMB 9240 / NCTC 8049)).